A 443-amino-acid chain; its full sequence is Endothelin receptor type B (443 aa).

The first 26 residues, 1 to 26, serve as a signal peptide directing secretion; sequence MQPLPTLCGRVLVALILACGVAGVQG. At 27–102 the chain is on the extracellular side; sequence EERRFPPARA…RTIEIKETFK (76 aa). A compositionally biased stretch (polar residues) spans 51–62; that stretch reads TKTSWPTGSNAS. Residues 51–89 are disordered; the sequence is TKTSWPTGSNASVPRLSAPPQMPKAGRTAGAQRRTLPPP. N-linked (GlcNAc...) asparagine glycosylation is present at Asn60. A helical membrane pass occupies residues 103–127; the sequence is YINTVVSCLVFVLGIIGNSTLLRII. The Cytoplasmic portion of the chain corresponds to 128–138; sequence YKNKCMRNGPN. Residues 139–164 traverse the membrane as a helical segment; sequence ILIASLALGDLLHIIIDIPINVYKLL. The Extracellular segment spans residues 165–176; sequence AEDWPFGVEMCK. Cysteines 175 and 256 form a disulfide. A helical membrane pass occupies residues 177-198; sequence LVPFIQKASVGITVLSLCALSI. At 199–219 the chain is on the cytoplasmic side; sequence DRYRAVASWSRIKGIGVPKWT. A helical transmembrane segment spans residues 220–244; it reads AVEIVLIWVVSVVLAVPEAVGFDMI. At 245 to 272 the chain is on the extracellular side; that stretch reads TADYKGSYLRICLLHPTQKTAFMQFYKN. Residues 273 to 297 traverse the membrane as a helical segment; the sequence is AKDWWLFSFYFCLPLAITAFFYTLE. Topologically, residues 298 to 325 are cytoplasmic; the sequence is TCEMLRKKSGMQIALNDHLKQRREVAKT. At Ser306 the chain carries Phosphoserine. A helical membrane pass occupies residues 326–351; that stretch reads VFCLVLVFALCWLPLHLSRILKHTLY. At 352–363 the chain is on the extracellular side; the sequence is DQNDPHRCELLS. A helical membrane pass occupies residues 364–390; the sequence is FLLVLEYIGINMASLNSCINPIALYLV. Over 391 to 443 the chain is Cytoplasmic; it reads SKRFKNCFKWCLCCWCQSFEEKQSLEDKQSCLKFKANDHGYDNFRSSNKYSSS. 3 S-palmitoyl cysteine lipidation sites follow: Cys403, Cys404, and Cys406. Phosphoserine is present on Ser420. Tyr440 carries the phosphotyrosine modification. Ser441, Ser442, and Ser443 each carry phosphoserine.

It belongs to the G-protein coupled receptor 1 family. Endothelin receptor subfamily. EDNRB sub-subfamily.

It localises to the cell membrane. Non-specific receptor for endothelin 1, 2, and 3. Mediates its action by association with G proteins that activate a phosphatidylinositol-calcium second messenger system. The protein is Endothelin receptor type B (EDNRB) of Equus caballus (Horse).